We begin with the raw amino-acid sequence, 347 residues long: Succinylglutamate desuccinylase (347 aa).

Residues His-64, Glu-67, and His-159 each contribute to the Zn(2+) site. Glu-222 is an active-site residue.

Belongs to the AspA/AstE family. Succinylglutamate desuccinylase subfamily. Zn(2+) serves as cofactor.

The enzyme catalyses N-succinyl-L-glutamate + H2O = L-glutamate + succinate. Its pathway is amino-acid degradation; L-arginine degradation via AST pathway; L-glutamate and succinate from L-arginine: step 5/5. In terms of biological role, transforms N(2)-succinylglutamate into succinate and glutamate. The chain is Succinylglutamate desuccinylase from Burkholderia cenocepacia (strain ATCC BAA-245 / DSM 16553 / LMG 16656 / NCTC 13227 / J2315 / CF5610) (Burkholderia cepacia (strain J2315)).